The sequence spans 235 residues: Aspartate/glutamate leucyltransferase (235 aa).

The protein belongs to the R-transferase family. Bpt subfamily.

Its subcellular location is the cytoplasm. The enzyme catalyses N-terminal L-glutamyl-[protein] + L-leucyl-tRNA(Leu) = N-terminal L-leucyl-L-glutamyl-[protein] + tRNA(Leu) + H(+). The catalysed reaction is N-terminal L-aspartyl-[protein] + L-leucyl-tRNA(Leu) = N-terminal L-leucyl-L-aspartyl-[protein] + tRNA(Leu) + H(+). In terms of biological role, functions in the N-end rule pathway of protein degradation where it conjugates Leu from its aminoacyl-tRNA to the N-termini of proteins containing an N-terminal aspartate or glutamate. The polypeptide is Aspartate/glutamate leucyltransferase (Shewanella putrefaciens (strain CN-32 / ATCC BAA-453)).